Reading from the N-terminus, the 365-residue chain is Anhydro-N-acetylmuramic acid kinase (365 aa).

9-16 (GTSLDGVD) lines the ATP pocket.

Belongs to the anhydro-N-acetylmuramic acid kinase family.

The catalysed reaction is 1,6-anhydro-N-acetyl-beta-muramate + ATP + H2O = N-acetyl-D-muramate 6-phosphate + ADP + H(+). Its pathway is amino-sugar metabolism; 1,6-anhydro-N-acetylmuramate degradation. The protein operates within cell wall biogenesis; peptidoglycan recycling. Functionally, catalyzes the specific phosphorylation of 1,6-anhydro-N-acetylmuramic acid (anhMurNAc) with the simultaneous cleavage of the 1,6-anhydro ring, generating MurNAc-6-P. Is required for the utilization of anhMurNAc either imported from the medium or derived from its own cell wall murein, and thus plays a role in cell wall recycling. The protein is Anhydro-N-acetylmuramic acid kinase of Zymomonas mobilis subsp. mobilis (strain ATCC 31821 / ZM4 / CP4).